We begin with the raw amino-acid sequence, 363 residues long: 43 kDa protein (363 aa).

The chain is 43 kDa protein (P43) from Lepidoptera (butterflies and moths).